A 219-amino-acid polypeptide reads, in one-letter code: Counting factor-associated protein C (219 aa).

The N-terminal stretch at 1-16 (MKVLILLVSLISVCFS) is a signal peptide. N-linked (GlcNAc...) asparagine glycosylation is found at Asn74 and Asn123.

The protein localises to the secreted. The protein is Counting factor-associated protein C (cfaC) of Dictyostelium discoideum (Social amoeba).